Reading from the N-terminus, the 197-residue chain is Holliday junction branch migration complex subunit RuvA (197 aa).

The tract at residues 1–64 (MIASIRGILI…EDSLTLYGFE (64 aa)) is domain I. The segment at 65-145 (TVEQRQLFET…GLPTGAAVTP (81 aa)) is domain II. Residues 146-148 (AVA) are flexible linker. The interval 148–197 (AAANAELSEALISLGFTDAEAAAAIAALPSDAPPDLEERVRLALRYFSAS) is domain III.

This sequence belongs to the RuvA family. Homotetramer. Forms an RuvA(8)-RuvB(12)-Holliday junction (HJ) complex. HJ DNA is sandwiched between 2 RuvA tetramers; dsDNA enters through RuvA and exits via RuvB. An RuvB hexamer assembles on each DNA strand where it exits the tetramer. Each RuvB hexamer is contacted by two RuvA subunits (via domain III) on 2 adjacent RuvB subunits; this complex drives branch migration. In the full resolvosome a probable DNA-RuvA(4)-RuvB(12)-RuvC(2) complex forms which resolves the HJ.

It is found in the cytoplasm. Functionally, the RuvA-RuvB-RuvC complex processes Holliday junction (HJ) DNA during genetic recombination and DNA repair, while the RuvA-RuvB complex plays an important role in the rescue of blocked DNA replication forks via replication fork reversal (RFR). RuvA specifically binds to HJ cruciform DNA, conferring on it an open structure. The RuvB hexamer acts as an ATP-dependent pump, pulling dsDNA into and through the RuvAB complex. HJ branch migration allows RuvC to scan DNA until it finds its consensus sequence, where it cleaves and resolves the cruciform DNA. The chain is Holliday junction branch migration complex subunit RuvA from Roseiflexus sp. (strain RS-1).